A 469-amino-acid chain; its full sequence is Aryl-phospho-beta-D-glucosidase BglH (469 aa).

Residue glutamate 175 is the Proton donor of the active site. Glutamate 368 (nucleophile) is an active-site residue.

Belongs to the glycosyl hydrolase 1 family.

The enzyme catalyses 6-phospho-beta-D-glucosyl-(1-&gt;4)-D-glucose + H2O = D-glucose 6-phosphate + D-glucose. Functionally, catalyzes the hydrolysis of aryl-phospho-beta-D-glucosides such as 4-methylumbelliferyl-phospho-beta-D-glucopyranoside (MUG-P), phosphoarbutin and phosphosalicin. Plays a major role in the utilization of arbutin or salicin as the sole carbon source. BglA and BglH are the major proteins contributing to hydrolysis of MUG-P by extracts of late-exponential-phase or stationary-phase B.subtilis cells. In Bacillus subtilis (strain 168), this protein is Aryl-phospho-beta-D-glucosidase BglH (bglH).